A 179-amino-acid polypeptide reads, in one-letter code: Large ribosomal subunit protein uL6 (179 aa).

This sequence belongs to the universal ribosomal protein uL6 family. As to quaternary structure, part of the 50S ribosomal subunit.

In terms of biological role, this protein binds to the 23S rRNA, and is important in its secondary structure. It is located near the subunit interface in the base of the L7/L12 stalk, and near the tRNA binding site of the peptidyltransferase center. The chain is Large ribosomal subunit protein uL6 from Gloeothece citriformis (strain PCC 7424) (Cyanothece sp. (strain PCC 7424)).